A 261-amino-acid polypeptide reads, in one-letter code: Cytochrome c oxidase subunit 3 (261 aa).

Over 1 to 15 (MTHQLHAYHMVKPSP) the chain is Mitochondrial matrix. The helical transmembrane segment at 16–34 (WPLTGALSAFLLTSGLIMW) threads the bilayer. Over 35-40 (FHFYST) the chain is Mitochondrial intermembrane. Residues 41 to 66 (ALLTLGLLTNVLTMYQWWRDIIREST) form a helical membrane-spanning segment. The Mitochondrial matrix segment spans residues 67–72 (YQGHHT). Residues 73 to 105 (TPVQKSLRYGMTLFIISEVFFFAGFFWAFYHSS) traverse the membrane as a helical segment. Residues 106-128 (LAPTPRLGCHWPPTGITPLNPLE) are Mitochondrial intermembrane-facing. The helical transmembrane segment at 129–152 (VPLLNTSVLLASGVTITWAHHSLM) threads the bilayer. Over 153 to 155 (NGN) the chain is Mitochondrial matrix. A helical membrane pass occupies residues 156–183 (RKQTIQALLITILLGTYFTLVQISEYFE). The Mitochondrial intermembrane segment spans residues 184–190 (APFTISD). Residues 191 to 223 (GIYGSTFFVATGFHGLHVIIGSTFLLICLIRQL) form a helical membrane-spanning segment. At 224 to 232 (FYHFTPSHH) the chain is on the mitochondrial matrix side. Residues 233 to 256 (FGFEAAAWYWHFVDVIWLFLYISI) form a helical membrane-spanning segment. The Mitochondrial intermembrane segment spans residues 257–261 (YWWGS).

This sequence belongs to the cytochrome c oxidase subunit 3 family. Component of the cytochrome c oxidase (complex IV, CIV), a multisubunit enzyme composed of 14 subunits. The complex is composed of a catalytic core of 3 subunits MT-CO1, MT-CO2 and MT-CO3, encoded in the mitochondrial DNA, and 11 supernumerary subunits COX4I, COX5A, COX5B, COX6A, COX6B, COX6C, COX7A, COX7B, COX7C, COX8 and NDUFA4, which are encoded in the nuclear genome. The complex exists as a monomer or a dimer and forms supercomplexes (SCs) in the inner mitochondrial membrane with NADH-ubiquinone oxidoreductase (complex I, CI) and ubiquinol-cytochrome c oxidoreductase (cytochrome b-c1 complex, complex III, CIII), resulting in different assemblies (supercomplex SCI(1)III(2)IV(1) and megacomplex MCI(2)III(2)IV(2)).

Its subcellular location is the mitochondrion inner membrane. The catalysed reaction is 4 Fe(II)-[cytochrome c] + O2 + 8 H(+)(in) = 4 Fe(III)-[cytochrome c] + 2 H2O + 4 H(+)(out). Its function is as follows. Component of the cytochrome c oxidase, the last enzyme in the mitochondrial electron transport chain which drives oxidative phosphorylation. The respiratory chain contains 3 multisubunit complexes succinate dehydrogenase (complex II, CII), ubiquinol-cytochrome c oxidoreductase (cytochrome b-c1 complex, complex III, CIII) and cytochrome c oxidase (complex IV, CIV), that cooperate to transfer electrons derived from NADH and succinate to molecular oxygen, creating an electrochemical gradient over the inner membrane that drives transmembrane transport and the ATP synthase. Cytochrome c oxidase is the component of the respiratory chain that catalyzes the reduction of oxygen to water. Electrons originating from reduced cytochrome c in the intermembrane space (IMS) are transferred via the dinuclear copper A center (CU(A)) of subunit 2 and heme A of subunit 1 to the active site in subunit 1, a binuclear center (BNC) formed by heme A3 and copper B (CU(B)). The BNC reduces molecular oxygen to 2 water molecules using 4 electrons from cytochrome c in the IMS and 4 protons from the mitochondrial matrix. The polypeptide is Cytochrome c oxidase subunit 3 (MT-CO3) (Papio hamadryas (Hamadryas baboon)).